The sequence spans 1471 residues: Gag-Pol polyprotein (1471 aa).

Residue glycine 2 is the site of N-myristoyl glycine; by host attachment. An interaction with Gp41 region spans residues 7–31 (VLSGKKTDELEKVRLRPGGKKRYCL). A Nuclear export signal motif is present at residues 16–22 (LEKVRLR). A Nuclear localization signal motif is present at residues 26–32 (KKRYCLK). The span at 105-114 (QRHLAADTEK) shows a compositional bias: basic and acidic residues. The disordered stretch occupies residues 105–130 (QRHLAADTEKMPATSRPTAPPSGGNY). Residue tyrosine 130 is modified to Phosphotyrosine; by host. The tract at residues 186-223 (NCVGDHQAAMQIIREIINEEAADWDQQHPIPGPLPAGQ) is interaction with human PPIA/CYPA and NUP153. The segment at 274 to 360 (YNPTNILDIK…GGPGQKARLM (87 aa)) is dimerization/Multimerization of capsid protein p24. CCHC-type zinc fingers lie at residues 388-405 (VTCW…QCRA) and 409-426 (QGCW…KCPE). Residues 441–508 (ASQLPHDPSA…PRETLQGGDR (68 aa)) are disordered. The span at 484–501 (DAEKLHEDGETAEREPRE) shows a compositional bias: basic and acidic residues. The segment at 513 to 517 (PQFSL) is dimerization of protease. The Peptidase A2 domain occupies 533-602 (EVLLDTGADD…PINIFGRNIL (70 aa)). Aspartate 537 serves as the catalytic For protease activity; shared with dimeric partner. Dimerization of protease regions lie at residues 561–567 (GIGGFIN) and 600–612 (NILN…LNFP). A Reverse transcriptase domain is found at 656 to 846 (GQLEEAPPTN…PFKWMGYELW (191 aa)). Residues aspartate 721, aspartate 796, and aspartate 797 each coordinate Mg(2+). Residues 838 to 846 (FKWMGYELW) form an RT 'primer grip' region. Positions 1008 to 1024 (WDQWWTDYWQVTWIPEW) match the Tryptophan repeat motif motif. One can recognise an RNase H type-1 domain in the interval 1044-1167 (LEKVETYYTD…VDHLVSQGIR (124 aa)). 4 residues coordinate Mg(2+): aspartate 1053, glutamate 1088, aspartate 1108, and aspartate 1159. The segment at 1173-1214 (EKIEPAQEEHEKYHGNVKELVHKFGLPQLVAKQIVNSCDKCQ) adopts an Integrase-type zinc-finger fold. Positions 1182, 1186, 1210, and 1213 each coordinate Zn(2+). The Integrase catalytic domain occupies 1224-1375 (VNAELGTWQM…PAERLVNMIT (152 aa)). The Mg(2+) site is built by aspartate 1234, aspartate 1286, and glutamate 1322. The integrase-type DNA-binding region spans 1393–1440 (FQVYYREGRDQLWKGPGELLWKGEGAVLIKVGTEIKVIPRRKAKIIRH).

In terms of assembly, homotrimer; further assembles as hexamers of trimers. Interacts with gp41 (via C-terminus). Interacts with host CALM1; this interaction induces a conformational change in the Matrix protein, triggering exposure of the myristate group. Interacts with host AP3D1; this interaction allows the polyprotein trafficking to multivesicular bodies during virus assembly. Part of the pre-integration complex (PIC) which is composed of viral genome, matrix protein, Vpr and integrase. Homodimer; the homodimer further multimerizes as homohexamers or homopentamers. Interacts with human PPIA/CYPA. Interacts with human NUP153. Interacts with host PDZD8; this interaction stabilizes the capsid. Interacts with monkey TRIM5; this interaction destabilizes the capsid. As to quaternary structure, homodimer, whose active site consists of two apposed aspartic acid residues. In terms of assembly, heterodimer of p66 RT and p51 RT (RT p66/p51). Heterodimerization of RT is essential for DNA polymerase activity. The overall folding of the subdomains is similar in p66 RT and p51 RT but the spatial arrangements of the subdomains are dramatically different. Homotetramer; may further associate as a homohexadecamer. Part of the pre-integration complex (PIC) which is composed of viral genome, matrix protein, Vpr and integrase. Interacts with human SMARCB1/INI1 and human PSIP1/LEDGF isoform 1. Interacts with human KPNA3; this interaction might play a role in nuclear import of the pre-integration complex. Interacts with human NUP153; this interaction might play a role in nuclear import of the pre-integration complex. Mg(2+) serves as cofactor. Post-translationally, specific enzymatic cleavages by the viral protease yield mature proteins. The protease is released by autocatalytic cleavage. The polyprotein is cleaved during and after budding, this process is termed maturation. Proteolytic cleavage of p66 RT removes the RNase H domain to yield the p51 RT subunit. Nucleocapsid protein p7 might be further cleaved after virus entry.

The protein resides in the host cell membrane. It localises to the host endosome. It is found in the host multivesicular body. Its subcellular location is the virion membrane. The protein localises to the host nucleus. The protein resides in the host cytoplasm. It localises to the virion. It catalyses the reaction Endopeptidase for which the P1 residue is preferably hydrophobic.. The enzyme catalyses Endohydrolysis of RNA in RNA/DNA hybrids. Three different cleavage modes: 1. sequence-specific internal cleavage of RNA. Human immunodeficiency virus type 1 and Moloney murine leukemia virus enzymes prefer to cleave the RNA strand one nucleotide away from the RNA-DNA junction. 2. RNA 5'-end directed cleavage 13-19 nucleotides from the RNA end. 3. DNA 3'-end directed cleavage 15-20 nucleotides away from the primer terminus.. The catalysed reaction is 3'-end directed exonucleolytic cleavage of viral RNA-DNA hybrid.. It carries out the reaction DNA(n) + a 2'-deoxyribonucleoside 5'-triphosphate = DNA(n+1) + diphosphate. With respect to regulation, protease: The viral protease is inhibited by many synthetic protease inhibitors (PIs), such as amprenavir, atazanavir, indinavir, loprinavir, nelfinavir, ritonavir and saquinavir. Use of protease inhibitors in tritherapy regimens permit more ambitious therapeutic strategies. Reverse transcriptase/ribonuclease H: RT can be inhibited either by nucleoside RT inhibitors (NRTIs) or by non nucleoside RT inhibitors (NNRTIs). NRTIs act as chain terminators, whereas NNRTIs inhibit DNA polymerization by binding a small hydrophobic pocket near the RT active site and inducing an allosteric change in this region. Classical NRTIs are abacavir, adefovir (PMEA), didanosine (ddI), lamivudine (3TC), stavudine (d4T), tenofovir (PMPA), zalcitabine (ddC), and zidovudine (AZT). Classical NNRTIs are atevirdine (BHAP U-87201E), delavirdine, efavirenz (DMP-266), emivirine (I-EBU), and nevirapine (BI-RG-587). The tritherapies used as a basic effective treatment of AIDS associate two NRTIs and one NNRTI. Its function is as follows. Mediates, with Gag polyprotein, the essential events in virion assembly, including binding the plasma membrane, making the protein-protein interactions necessary to create spherical particles, recruiting the viral Env proteins, and packaging the genomic RNA via direct interactions with the RNA packaging sequence (Psi). Gag-Pol polyprotein may regulate its own translation, by the binding genomic RNA in the 5'-UTR. At low concentration, the polyprotein would promote translation, whereas at high concentration, the polyprotein would encapsidate genomic RNA and then shut off translation. In terms of biological role, targets the polyprotein to the plasma membrane via a multipartite membrane-binding signal, that includes its myristoylated N-terminus. Matrix protein is part of the pre-integration complex. Implicated in the release from host cell mediated by Vpu. Binds to RNA. Forms the conical core that encapsulates the genomic RNA-nucleocapsid complex in the virion. Most core are conical, with only 7% tubular. The core is constituted by capsid protein hexamer subunits. The core is disassembled soon after virion entry. Host restriction factors such as TRIM5-alpha or TRIMCyp bind retroviral capsids and cause premature capsid disassembly, leading to blocks in reverse transcription. Capsid restriction by TRIM5 is one of the factors which restricts HIV-1 to the human species. Host PIN1 apparently facilitates the virion uncoating. On the other hand, interactions with PDZD8 or CYPA stabilize the capsid. Functionally, encapsulates and protects viral dimeric unspliced genomic RNA (gRNA). Binds these RNAs through its zinc fingers. Acts as a nucleic acid chaperone which is involved in rearangement of nucleic acid secondary structure during gRNA retrotranscription. Also facilitates template switch leading to recombination. As part of the polyprotein, participates in gRNA dimerization, packaging, tRNA incorporation and virion assembly. Its function is as follows. Aspartyl protease that mediates proteolytic cleavages of Gag and Gag-Pol polyproteins during or shortly after the release of the virion from the plasma membrane. Cleavages take place as an ordered, step-wise cascade to yield mature proteins. This process is called maturation. Displays maximal activity during the budding process just prior to particle release from the cell. Also cleaves Nef and Vif, probably concomitantly with viral structural proteins on maturation of virus particles. Hydrolyzes host EIF4GI and PABP1 in order to shut off the capped cellular mRNA translation. The resulting inhibition of cellular protein synthesis serves to ensure maximal viral gene expression and to evade host immune response. In terms of biological role, multifunctional enzyme that converts the viral RNA genome into dsDNA in the cytoplasm, shortly after virus entry into the cell. This enzyme displays a DNA polymerase activity that can copy either DNA or RNA templates, and a ribonuclease H (RNase H) activity that cleaves the RNA strand of RNA-DNA heteroduplexes in a partially processive 3' to 5' endonucleasic mode. Conversion of viral genomic RNA into dsDNA requires many steps. A tRNA(3)-Lys binds to the primer-binding site (PBS) situated at the 5'-end of the viral RNA. RT uses the 3' end of the tRNA primer to perform a short round of RNA-dependent minus-strand DNA synthesis. The reading proceeds through the U5 region and ends after the repeated (R) region which is present at both ends of viral RNA. The portion of the RNA-DNA heteroduplex is digested by the RNase H, resulting in a ssDNA product attached to the tRNA primer. This ssDNA/tRNA hybridizes with the identical R region situated at the 3' end of viral RNA. This template exchange, known as minus-strand DNA strong stop transfer, can be either intra- or intermolecular. RT uses the 3' end of this newly synthesized short ssDNA to perform the RNA-dependent minus-strand DNA synthesis of the whole template. RNase H digests the RNA template except for two polypurine tracts (PPTs) situated at the 5'-end and near the center of the genome. It is not clear if both polymerase and RNase H activities are simultaneous. RNase H probably can proceed both in a polymerase-dependent (RNA cut into small fragments by the same RT performing DNA synthesis) and a polymerase-independent mode (cleavage of remaining RNA fragments by free RTs). Secondly, RT performs DNA-directed plus-strand DNA synthesis using the PPTs that have not been removed by RNase H as primers. PPTs and tRNA primers are then removed by RNase H. The 3' and 5' ssDNA PBS regions hybridize to form a circular dsDNA intermediate. Strand displacement synthesis by RT to the PBS and PPT ends produces a blunt ended, linear dsDNA copy of the viral genome that includes long terminal repeats (LTRs) at both ends. Catalyzes viral DNA integration into the host chromosome, by performing a series of DNA cutting and joining reactions. This enzyme activity takes place after virion entry into a cell and reverse transcription of the RNA genome in dsDNA. The first step in the integration process is 3' processing. This step requires a complex comprising the viral genome, matrix protein, Vpr and integrase. This complex is called the pre-integration complex (PIC). The integrase protein removes 2 nucleotides from each 3' end of the viral DNA, leaving recessed CA OH's at the 3' ends. In the second step, the PIC enters cell nucleus. This process is mediated through integrase and Vpr proteins, and allows the virus to infect a non dividing cell. This ability to enter the nucleus is specific of lentiviruses, other retroviruses cannot and rely on cell division to access cell chromosomes. In the third step, termed strand transfer, the integrase protein joins the previously processed 3' ends to the 5' ends of strands of target cellular DNA at the site of integration. The 5'-ends are produced by integrase-catalyzed staggered cuts, 5 bp apart. A Y-shaped, gapped, recombination intermediate results, with the 5'-ends of the viral DNA strands and the 3' ends of target DNA strands remaining unjoined, flanking a gap of 5 bp. The last step is viral DNA integration into host chromosome. This involves host DNA repair synthesis in which the 5 bp gaps between the unjoined strands are filled in and then ligated. Since this process occurs at both cuts flanking the HIV genome, a 5 bp duplication of host DNA is produced at the ends of HIV-1 integration. Alternatively, Integrase may catalyze the excision of viral DNA just after strand transfer, this is termed disintegration. This chain is Gag-Pol polyprotein (gag-pol), found in Human immunodeficiency virus type 2 subtype B (isolate UC1) (HIV-2).